The primary structure comprises 68 residues: MKPSGLTLAFLVVFMMAIMYNSVQAEALADADAEAFAEAGVKELFGKAWGLVKKHLPKACGLMGYVKQ.

An N-terminal signal peptide occupies residues 1–25 (MKPSGLTLAFLVVFMMAIMYNSVQA). The propeptide occupies 26-39 (EALADADAEAFAEA).

The protein belongs to the formicidae venom precursor-01 superfamily. Homo- or heterodimer with PLP4 (AC A0A348G5W0); disulfide-linked. Post-translationally, truncated sequences of this peptide have also been found in the venom. It is possible they have been cleaved in the venom. Expressed by the venom gland.

The protein resides in the secreted. This homodimer composed of two cationic amphipathic alpha-helical peptides has antimicrobial activities against E.coli, S.aureus (MIC=3.1 uM), and S.cerevisiae (MIC=3.1 uM). It also shows histamine-releasing activity (66.4% at 10 uM) and a weak hemolytic activity (10.5% at 50 uM). This Odontomachus monticola (Trap-jaw ant) protein is U-poneritoxin(01)-Om4b.